Consider the following 671-residue polypeptide: Zinc finger and BTB domain-containing protein 16-A (671 aa).

The 63-residue stretch at 34–96 folds into the BTB domain; it reads CDVVIMVDSQ…AYTATLQAKV (63 aa). 2 disordered regions span residues 130-167 and 248-289; these read ENDT…TEES and VDES…RSSV. The span at 270-279 shows a compositional bias: basic and acidic residues; that stretch reads RSGEPDKNRD. Threonine 283 carries the phosphothreonine modification. C2H2-type zinc fingers lie at residues 401 to 423, 429 to 451, 458 to 480, 487 to 509, 515 to 537, 544 to 566, 572 to 594, 600 to 622, and 628 to 650; these read ERCN…RKLH, YGCE…LLSH, IVCD…RQIH, IFCL…MEVH, YICS…LRSH, FECE…KRIH, YECN…YRVH, FECK…LRTH, and YQCT…MKGH.

It belongs to the krueppel C2H2-type zinc-finger protein family. In terms of assembly, interacts with btbd6a (via BTB domain). In terms of processing, polyubiquitinated, leading to its proteasomal degradation. During early stages of primary neurogenesis, expressed in the neural epithelium, with highest levels in the forebrain and midbrain. Also expressed in a posterior-to-anterior gradient in the caudal neural plate at the 3-6 somite stage.

It localises to the nucleus. Its subcellular location is the cytoplasm. It functions in the pathway protein modification; protein ubiquitination. Its function is as follows. Probable transcription factor. Probable substrate-recognition component of an E3 ubiquitin-protein ligase complex which mediates the ubiquitination and subsequent proteasomal degradation of target proteins. Inhibits neurogenesis. The sequence is that of Zinc finger and BTB domain-containing protein 16-A from Danio rerio (Zebrafish).